The sequence spans 579 residues: MQQPQQQDLQIGLPYAPVQPPIPSPAAYFAYLPSPSRWTFTQGLIVGQVSMVIVALLLIRYVIFEDSATALEKERLMRLKVSQRRSKLHAKALLQDARKANSAAASAAAAAAPSPASHPLRKSHRLASDTRASMFANILDKTAYDLSSHLPESADWLNVMFAQAIAGYREDVLTGGVSSHHHTASDAIPSPNPLEPQKERTARDLMEEILNRATSSFLDPIRVTEADFGDAYPIFTNARVRPADDTGRTRIEIDVDYSDQITLAIDTKLLINFPKPRFAVLPVSLGLTIVRFSGTLAIELFSSDPNATVLPTANPNPSSSSSSSATPPRSRHQLHFSLHPDFALEASATSLLGSRAKLQDIPKIEQLLISRLRGWIMDRFVWPRYWSLTLPNLVPSPAASRSFSAAAAANRHTDAASVGSSGGHGQINVGTGVERTDASVIQPGHHESARQEMLHAASERPSLASSRPPHVRSSSSGLRANGMGSVEAWRAHAAGVYNQPSHQHATSLNQAALLRAHVGGGGATDCAPGSDVNIEVPGSYRGSVAGAGIELASSSNASSVLPTGAHHSSGLRNRPGFVQ.

Residues 1 to 43 lie on the Lumenal side of the membrane; that stretch reads MQQPQQQDLQIGLPYAPVQPPIPSPAAYFAYLPSPSRWTFTQG. A helical transmembrane segment spans residues 44–64; that stretch reads LIVGQVSMVIVALLLIRYVIF. Topologically, residues 65–579 are cytoplasmic; sequence EDSATALEKE…GLRNRPGFVQ (515 aa). In terms of domain architecture, SMP-LTD spans 150 to 391; it reads LPESADWLNV…WPRYWSLTLP (242 aa). Disordered regions lie at residues 309–332, 460–479, and 558–579; these read VLPT…RSRH, RPSL…SGLR, and SSVL…GFVQ. Composition is skewed to low complexity over residues 311–328 and 465–476; these read PTAN…ATPP and SSRPPHVRSSSS.

This sequence belongs to the MMM1 family. In terms of assembly, homodimer. Component of the ER-mitochondria encounter structure (ERMES) or MDM complex, composed of MMM1, MDM10, MDM12 and MDM34. An MMM1 homodimer associates with one molecule of MDM12 on each side in a pairwise head-to-tail manner, and the SMP-LTD domains of MMM1 and MDM12 generate a continuous hydrophobic tunnel for phospholipid trafficking.

The protein localises to the endoplasmic reticulum membrane. Its function is as follows. Component of the ERMES/MDM complex, which serves as a molecular tether to connect the endoplasmic reticulum (ER) and mitochondria. Components of this complex are involved in the control of mitochondrial shape and protein biogenesis, and function in nonvesicular lipid trafficking between the ER and mitochondria. The MDM12-MMM1 subcomplex functions in the major beta-barrel assembly pathway that is responsible for biogenesis of all outer membrane beta-barrel proteins, and acts in a late step after the SAM complex. The MDM10-MDM12-MMM1 subcomplex further acts in the TOM40-specific pathway after the action of the MDM12-MMM1 complex. Essential for establishing and maintaining the structure of mitochondria and maintenance of mtDNA nucleoids. This Mycosarcoma maydis (Corn smut fungus) protein is Maintenance of mitochondrial morphology protein 1.